The following is a 507-amino-acid chain: ATP synthase subunit alpha, chloroplastic (507 aa).

170 to 177 (GDRQTGKT) provides a ligand contact to ATP.

This sequence belongs to the ATPase alpha/beta chains family. F-type ATPases have 2 components, CF(1) - the catalytic core - and CF(0) - the membrane proton channel. CF(1) has five subunits: alpha(3), beta(3), gamma(1), delta(1), epsilon(1). CF(0) has four main subunits: a, b, b' and c.

It localises to the plastid. The protein localises to the chloroplast thylakoid membrane. It carries out the reaction ATP + H2O + 4 H(+)(in) = ADP + phosphate + 5 H(+)(out). Produces ATP from ADP in the presence of a proton gradient across the membrane. The alpha chain is a regulatory subunit. This Tetradesmus obliquus (Green alga) protein is ATP synthase subunit alpha, chloroplastic.